The primary structure comprises 623 residues: MWKLLLWVGLVLVLKHHDGAAHKLVCYFTNWAHSRPGPASILPHDLDPFLCTHLIFAFASMNNNQIVAKDLQDEKILYPEFNKLKERNRELKTLLSIGGWNFGTSRFTTMLSTFANREKFIASVISLLRTHDFDGLDLFFLYPGLRGSPMHDRWTFLFLIEELLFAFRKEALLTMRPRLLLSAAVSGVPHIVQTSYDVRFLGRLLDFINVLSYDLHGSWEKFTGHNSPLFSLPEDPKSSAYAMNYWRKLGAPSEKLIMGIPTYGRTFRLLKASKNGLQATAIGPASPGKYTKQAGFLAYFEICSFVWGAKKHWIDYQYVPYANKGKEWVGYDDAISFSYKAWFIRREHFGGAMVWTLDMDDVRGTFCGTGPFPLVYVMNDILVRAEFSSTSLPQFWLSSAVNSSSTDPERLAVTKAWTTDIKILPPGGEAGVTEIHGKCENMTITPRVTIVTPTKETVSLGKHTVALGEKTEITGATTMTSVGHQSMTPGEKALTPVGHQSELPGKKTLTPVGHQSVTTGQKTLISVGYHSVTPGEKTLTPVGHPSVTPVSHQSVSPGGMTMTPVHFQTETLRQNTMAPRRKAVAHEKVTVPSRKISVTPEGQTVPLRGEYLTSETGTHPQDG.

Positions 1 to 21 (MWKLLLWVGLVLVLKHHDGAA) are cleaved as a signal peptide. The 364-residue stretch at 22–385 (HKLVCYFTNW…YVMNDILVRA (364 aa)) folds into the GH18 domain. The cysteines at positions 26 and 51 are disulfide-linked. Chitin-binding positions include 71–72 (LQ), 98–101 (GGWN), Tyr-142, 211–214 (LSYD), and Trp-355. N-linked (GlcNAc...) asparagine glycans are attached at residues Asn-402 and Asn-441. Disordered regions lie at residues 539–558 (LTPV…VSPG) and 594–623 (RKIS…PQDG). Polar residues predominate over residues 613-623 (TSETGTHPQDG).

The protein belongs to the glycosyl hydrolase 18 family. In terms of tissue distribution, oviduct.

It localises to the cytoplasmic vesicle. Its subcellular location is the secretory vesicle. In terms of biological role, binds to oocyte zona pellucida in vivo. May play a role in the fertilization process and/or early embryonic development. In Papio anubis (Olive baboon), this protein is Oviduct-specific glycoprotein (OVGP1).